The following is a 313-amino-acid chain: MNATYRHITVLLEEAVSALAPREDGCYLDGTFGRGGHSRALLEKLGTGGRLLGFDKDPQAIQTGKALAAEDGRFVIVQRSFAELGDEVRARGLEGRVDGVLLDLGVSSPQLDDPERGFSFLNDGPLDMRMNPGQGISAAEFIASAAEEEIARVFKEYGEERFAKRMARAIVQRRQERPFERTADLAEVITVANPAWEKGKNPATRAFQGLRIHVNNELGDLERGLDAALESLAVGGRLVVISFHSLEDRIVKLFMRKHAKGEADNLPRDLPIRSKVFEPRLKLLGKPQYASEAELKANPRSRSAVMRVAEKLK.

Residues 35–37 (GGH), Asp55, Phe81, Asp103, and Gln110 contribute to the S-adenosyl-L-methionine site.

Belongs to the methyltransferase superfamily. RsmH family.

It is found in the cytoplasm. It carries out the reaction cytidine(1402) in 16S rRNA + S-adenosyl-L-methionine = N(4)-methylcytidine(1402) in 16S rRNA + S-adenosyl-L-homocysteine + H(+). In terms of biological role, specifically methylates the N4 position of cytidine in position 1402 (C1402) of 16S rRNA. This chain is Ribosomal RNA small subunit methyltransferase H, found in Pseudomonas paraeruginosa (strain DSM 24068 / PA7) (Pseudomonas aeruginosa (strain PA7)).